The primary structure comprises 179 residues: Large ribosomal subunit protein uL5 (179 aa).

It belongs to the universal ribosomal protein uL5 family. As to quaternary structure, part of the 50S ribosomal subunit; part of the 5S rRNA/L5/L18/L25 subcomplex. Contacts the 5S rRNA and the P site tRNA. Forms a bridge to the 30S subunit in the 70S ribosome.

Functionally, this is one of the proteins that bind and probably mediate the attachment of the 5S RNA into the large ribosomal subunit, where it forms part of the central protuberance. In the 70S ribosome it contacts protein S13 of the 30S subunit (bridge B1b), connecting the 2 subunits; this bridge is implicated in subunit movement. Contacts the P site tRNA; the 5S rRNA and some of its associated proteins might help stabilize positioning of ribosome-bound tRNAs. In Alcanivorax borkumensis (strain ATCC 700651 / DSM 11573 / NCIMB 13689 / SK2), this protein is Large ribosomal subunit protein uL5.